A 149-amino-acid polypeptide reads, in one-letter code: Large ribosomal subunit protein bL9 (149 aa).

Belongs to the bacterial ribosomal protein bL9 family.

Functionally, binds to the 23S rRNA. The polypeptide is Large ribosomal subunit protein bL9 (Synechococcus sp. (strain JA-2-3B'a(2-13)) (Cyanobacteria bacterium Yellowstone B-Prime)).